A 20-amino-acid polypeptide reads, in one-letter code: Agglutinin beta-2 chain isoform 1 (20 aa).

A compositionally biased stretch (polar residues) spans 1–10; sequence TQSTGTSQTI. A disordered region spans residues 1-20; sequence TQSTGTSQTIAVGLWGGPDN.

This sequence belongs to the jacalin lectin family. Tetramer of four alpha chains associated with two or four beta chains.

Its function is as follows. Alpha-methyl-D-mannoside and D-mannose specific lectin. Binds IgA. The protein is Agglutinin beta-2 chain isoform 1 of Morus nigra (Black mulberry).